A 105-amino-acid polypeptide reads, in one-letter code: Small ribosomal subunit protein uS10 (105 aa).

This sequence belongs to the universal ribosomal protein uS10 family. Part of the 30S ribosomal subunit.

In terms of biological role, involved in the binding of tRNA to the ribosomes. The protein is Small ribosomal subunit protein uS10 of Anaplasma marginale (strain Florida).